We begin with the raw amino-acid sequence, 212 residues long: MLRILTKDMLETDRRAFDEMFRARAAVFRDRLGWQVDVRDQWERDRYDEAEDPVYLVTQQPSGTLTGSLRLLPTTGATMLKSEFRHFFDQPIDVDSPTTWECTRFCLHPHAGDMKQSRAVATELLSGLCDLALDTGIENIVGVYDVAMVAVYRRIGWRPTPLARSRPEIGKLYVGLWDVTADNCRTLRANLSRLLEQASPYPARVLVDGGMR.

It belongs to the autoinducer synthase family.

It catalyses the reaction a fatty acyl-[ACP] + S-adenosyl-L-methionine = an N-acyl-L-homoserine lactone + S-methyl-5'-thioadenosine + holo-[ACP] + H(+). In terms of biological role, required for the synthesis of autoinducer molecules which bind to RaiR and that are involved in the restriction of nodule number. This chain is Acyl-homoserine-lactone synthase (raiI), found in Rhizobium etli.